The chain runs to 600 residues: Proline--tRNA ligase (600 aa).

This sequence belongs to the class-II aminoacyl-tRNA synthetase family. ProS type 1 subfamily. In terms of assembly, homodimer.

The protein localises to the cytoplasm. The enzyme catalyses tRNA(Pro) + L-proline + ATP = L-prolyl-tRNA(Pro) + AMP + diphosphate. Functionally, catalyzes the attachment of proline to tRNA(Pro) in a two-step reaction: proline is first activated by ATP to form Pro-AMP and then transferred to the acceptor end of tRNA(Pro). As ProRS can inadvertently accommodate and process non-cognate amino acids such as alanine and cysteine, to avoid such errors it has two additional distinct editing activities against alanine. One activity is designated as 'pretransfer' editing and involves the tRNA(Pro)-independent hydrolysis of activated Ala-AMP. The other activity is designated 'posttransfer' editing and involves deacylation of mischarged Ala-tRNA(Pro). The misacylated Cys-tRNA(Pro) is not edited by ProRS. In Synechococcus elongatus (strain ATCC 33912 / PCC 7942 / FACHB-805) (Anacystis nidulans R2), this protein is Proline--tRNA ligase.